A 123-amino-acid chain; its full sequence is Histone H2B (123 aa).

Residues 1-32 (MPPKAASKGAKKAASKAKAARSTDKKKRRRRR) form a disordered region. The span at 9–32 (GAKKAASKAKAARSTDKKKRRRRR) shows a compositional bias: basic residues. A glycan (O-linked (GlcNAc) serine) is linked at Ser110. Lys118 is covalently cross-linked (Glycyl lysine isopeptide (Lys-Gly) (interchain with G-Cter in ubiquitin)).

It belongs to the histone H2B family. As to quaternary structure, the nucleosome is a histone octamer containing two molecules each of H2A, H2B, H3 and H4 assembled in one H3-H4 heterotetramer and two H2A-H2B heterodimers. The octamer wraps approximately 147 bp of DNA. Monoubiquitination of Lys-118 gives a specific tag for epigenetic transcriptional activation and is also prerequisite for histone H3 'Lys-4' and 'Lys-79' methylation.

It is found in the nucleus. The protein resides in the chromosome. Functionally, core component of nucleosome. Nucleosomes wrap and compact DNA into chromatin, limiting DNA accessibility to the cellular machineries which require DNA as a template. Histones thereby play a central role in transcription regulation, DNA repair, DNA replication and chromosomal stability. DNA accessibility is regulated via a complex set of post-translational modifications of histones, also called histone code, and nucleosome remodeling. This chain is Histone H2B, found in Urechis caupo (Innkeeper worm).